The primary structure comprises 334 residues: D-fructose 1,6-bisphosphatase class 2/sedoheptulose 1,7-bisphosphatase (334 aa).

Mn(2+) is bound by residues D33, E57, D85, and E88. Substrate is bound by residues 88 to 90 (EGT), Y119, 164 to 166 (RAR), and 186 to 188 (DGD). E213 is a Mn(2+) binding site.

This sequence belongs to the FBPase class 2 family. In terms of assembly, homotetramer. Requires Mn(2+) as cofactor.

It catalyses the reaction beta-D-fructose 1,6-bisphosphate + H2O = beta-D-fructose 6-phosphate + phosphate. It carries out the reaction D-sedoheptulose 1,7-bisphosphate + H2O = D-sedoheptulose 7-phosphate + phosphate. Its pathway is carbohydrate biosynthesis; Calvin cycle. Its function is as follows. Catalyzes the hydrolysis of fructose 1,6-bisphosphate (Fru 1,6-P2) and sedoheptulose 1,7-bisphosphate (Sed 1,7-P2) to fructose 6-phosphate and sedoheptulose 7-phosphate, respectively. This is D-fructose 1,6-bisphosphatase class 2/sedoheptulose 1,7-bisphosphatase from Synechococcus sp. (strain CC9902).